The following is a 307-amino-acid chain: MGCDGGTIPKRHELVKGPKKVEKVDKDAELVAQWNYCTLSQEILRRPIVACELGRLYNKDAVIEFLLDKSAEKALGKAASHIRSIKNVTELRLSDNPAWEGDKGNTKGDKHDDLQRARFICPVVGLEMNGRHRFCFLRCCGCVFSERALKEIKAEVCHTCGAAFQEEDIIVLNGTKEDVEMLKKRMEERRLRAKLEKKTKKPKTATECASKPGTTQDSAGPSKVKSGKPEEADPDPREKKSTPAPRGAATNGSASGKVGKPPCGALKRSIADSEESETYKSIFTSHSSAKRSKEESAHWVTHTSYCF.

Positions 193 to 296 (AKLEKKTKKP…SSAKRSKEES (104 aa)) are disordered. Residues 227 to 241 (GKPEEADPDPREKKS) are compositionally biased toward basic and acidic residues. Ser288 is modified (phosphoserine).

It belongs to the rtf2 family. In terms of assembly, interacts with DDI2; probably also interacts with DDI1. Undergoes proteasomal degradation, via DDI1 and DDI2. Removal from stalled replisomes and degradation are required for genome stability.

It localises to the chromosome. Functionally, replication termination factor which is a component of the elongating replisome. Required for ATR pathway signaling upon DNA damage and has a positive activity during DNA replication. Might function to facilitate fork pausing at replication fork barriers like the rDNA. May be globally required to stimulate ATR signaling after the fork stalls or encounters a lesion. Interacts with nascent DNA. In Mus musculus (Mouse), this protein is Replication termination factor 2.